A 342-amino-acid polypeptide reads, in one-letter code: Uroporphyrinogen decarboxylase (342 aa).

Residues 22 to 26 (RQAGR), Phe-41, Asp-72, Tyr-146, Ser-201, and His-317 each bind substrate.

This sequence belongs to the uroporphyrinogen decarboxylase family. In terms of assembly, homodimer.

It localises to the cytoplasm. It catalyses the reaction uroporphyrinogen III + 4 H(+) = coproporphyrinogen III + 4 CO2. It participates in porphyrin-containing compound metabolism; protoporphyrin-IX biosynthesis; coproporphyrinogen-III from 5-aminolevulinate: step 4/4. Catalyzes the decarboxylation of four acetate groups of uroporphyrinogen-III to yield coproporphyrinogen-III. This is Uroporphyrinogen decarboxylase from Orientia tsutsugamushi (strain Boryong) (Rickettsia tsutsugamushi).